Reading from the N-terminus, the 108-residue chain is Trp operon repressor homolog (108 aa).

A DNA-binding region spans residues 59-82; sequence QRQISQLLGVGVATITRGSNELKS.

It belongs to the TrpR family. As to quaternary structure, homodimer.

Its subcellular location is the cytoplasm. Its function is as follows. This protein is an aporepressor. When complexed with L-tryptophan it binds the operator region of the trp operon and prevents the initiation of transcription. The chain is Trp operon repressor homolog from Aliivibrio salmonicida (strain LFI1238) (Vibrio salmonicida (strain LFI1238)).